Consider the following 380-residue polypeptide: Cytochrome b (380 aa).

Transmembrane regions (helical) follow at residues 33-53, 77-98, 113-133, and 178-198; these read FGSL…FLAM, WLIR…YLHI, WTIG…GYVL, and FFAF…IHLL. 2 residues coordinate heme b: His83 and His97. Positions 182 and 196 each coordinate heme b. His201 is a binding site for a ubiquinone. A run of 4 helical transmembrane segments spans residues 226-246, 288-308, 320-340, and 347-367; these read YKDL…ALFS, LGGV…PFLH, VTQF…WIGG, and FVII…VLIP.

It belongs to the cytochrome b family. As to quaternary structure, the cytochrome bc1 complex contains 3 respiratory subunits (MT-CYB, CYC1 and UQCRFS1), 2 core proteins (UQCRC1 and UQCRC2) and probably 6 low-molecular weight proteins. Heme b serves as cofactor.

The protein localises to the mitochondrion inner membrane. Its function is as follows. Component of the ubiquinol-cytochrome c reductase complex (complex III or cytochrome b-c1 complex) that is part of the mitochondrial respiratory chain. The b-c1 complex mediates electron transfer from ubiquinol to cytochrome c. Contributes to the generation of a proton gradient across the mitochondrial membrane that is then used for ATP synthesis. The sequence is that of Cytochrome b (mt-cyb) from Kareius bicoloratus (Stone flounder).